An 822-amino-acid chain; its full sequence is Probable phosphoketolase (822 aa).

Belongs to the XFP family. Thiamine diphosphate serves as cofactor.

The protein is Probable phosphoketolase of Lactococcus lactis subsp. lactis (strain IL1403) (Streptococcus lactis).